The sequence spans 88 residues: Phosphoribosyl-ATP pyrophosphatase (88 aa).

It belongs to the PRA-PH family.

It is found in the cytoplasm. It carries out the reaction 1-(5-phospho-beta-D-ribosyl)-ATP + H2O = 1-(5-phospho-beta-D-ribosyl)-5'-AMP + diphosphate + H(+). It functions in the pathway amino-acid biosynthesis; L-histidine biosynthesis; L-histidine from 5-phospho-alpha-D-ribose 1-diphosphate: step 2/9. The sequence is that of Phosphoribosyl-ATP pyrophosphatase from Cutibacterium acnes (strain DSM 16379 / KPA171202) (Propionibacterium acnes).